Consider the following 262-residue polypeptide: MQPDLLSRKTAALTLQKFHTLSPLTHCMTNDVVQTFTANTLLALGASPAMVIETEEASQFAAVASALLINVGTLTQARAHAMRAAVVHAKRVKTPWTLDPVAVGSLDYRRHFCTELLSLNPDAIRGNASEIMALAGVSNSGRGVDSTDVVANALPAAVMLAQETGAVVVVTGEVDYVTDGRRTVGVGGGDPLMTKVVGTGCALSAVVAACCALPGDRLLNVASACSWMKQAGERAIVRSQGPGTFVPYFLDALWQMTQEVEA.

M50 is a substrate binding site. The ATP site is built by R125 and T171. G198 lines the substrate pocket.

Belongs to the Thz kinase family. Mg(2+) serves as cofactor.

The catalysed reaction is 5-(2-hydroxyethyl)-4-methylthiazole + ATP = 4-methyl-5-(2-phosphooxyethyl)-thiazole + ADP + H(+). Its pathway is cofactor biosynthesis; thiamine diphosphate biosynthesis; 4-methyl-5-(2-phosphoethyl)-thiazole from 5-(2-hydroxyethyl)-4-methylthiazole: step 1/1. Functionally, catalyzes the phosphorylation of the hydroxyl group of 4-methyl-5-beta-hydroxyethylthiazole (THZ). This Escherichia fergusonii (strain ATCC 35469 / DSM 13698 / CCUG 18766 / IAM 14443 / JCM 21226 / LMG 7866 / NBRC 102419 / NCTC 12128 / CDC 0568-73) protein is Hydroxyethylthiazole kinase.